The chain runs to 503 residues: Aminoaldehyde dehydrogenase 1, peroxisomal (503 aa).

Residues Asn-27, Ile-28, Asp-99, and Leu-189 each contribute to the Na(+) site. 238–245 lines the NAD(+) pocket; it reads GSSATGSK. Glu-260 (proton acceptor) is an active-site residue. NAD(+)-binding residues include Cys-294 and Glu-393. Catalysis depends on Cys-294, which acts as the Nucleophile. Residues 501-503 carry the Microbody targeting signal motif; it reads SKL.

The protein belongs to the aldehyde dehydrogenase family. As to quaternary structure, forms homodimers.

It localises to the peroxisome. It carries out the reaction 3-aminopropanal + NAD(+) + H2O = beta-alanine + NADH + 2 H(+). The catalysed reaction is 4-aminobutanal + NAD(+) + H2O = 4-aminobutanoate + NADH + 2 H(+). It catalyses the reaction 4-guanidinobutanal + NAD(+) + H2O = 4-guanidinobutanoate + NADH + 2 H(+). It participates in amine and polyamine biosynthesis; betaine biosynthesis via choline pathway; betaine from betaine aldehyde: step 1/1. Dehydrogenase that catalyzes the oxidation of several aminoaldehydes. Metabolizes and detoxifies aldehyde products of polyamine degradation to non-toxic amino acids. Catalyzes the oxidation of 3-aminopropanal to beta-alanine. Catalyzes the oxidation of 4-aminobutanal to 4-aminobutanoate. Catalyzes the oxidation of 4-guanidinobutanal to 4-guanidinobutanoate. The sequence is that of Aminoaldehyde dehydrogenase 1, peroxisomal from Pisum sativum (Garden pea).